The following is a 435-amino-acid chain: Xylose isomerase (435 aa).

Residues His100 and Asp103 contribute to the active site. The Mg(2+) site is built by Glu231, Glu267, His270, Asp295, Asp306, Asp308, and Asp338.

Belongs to the xylose isomerase family. In terms of assembly, homotetramer. It depends on Mg(2+) as a cofactor.

Its subcellular location is the cytoplasm. It carries out the reaction alpha-D-xylose = alpha-D-xylulofuranose. In Brucella suis biovar 1 (strain 1330), this protein is Xylose isomerase.